We begin with the raw amino-acid sequence, 315 residues long: Acetaldehyde dehydrogenase 1 (315 aa).

Residue Ser-12–Ile-15 participates in NAD(+) binding. Cys-132 (acyl-thioester intermediate) is an active-site residue. Residues Ser-163–Asn-171 and Asn-291 each bind NAD(+).

It belongs to the acetaldehyde dehydrogenase family.

The catalysed reaction is acetaldehyde + NAD(+) + CoA = acetyl-CoA + NADH + H(+). The sequence is that of Acetaldehyde dehydrogenase 1 from Paraburkholderia phymatum (strain DSM 17167 / CIP 108236 / LMG 21445 / STM815) (Burkholderia phymatum).